A 451-amino-acid polypeptide reads, in one-letter code: MSEKEIWDKVLEIAQERISNTSYQTFIKDTQLYSLKNDEAIILVSLPFNASWLNQRYSEIMQAIIYDVIGYEVKPHFISEDELASYNNVNTQEVQEPQVQHSSIDDKTWGKEQFNMHNTFDTFVIGPGNRFPHAASLAVAEAPAEAYNPLFIYGGVGLGKTHLMHAIGHHVLSNKPNAKVIYTSSEKFTNEFIKSIRDNETEAFREKYRKIDVLLIDDIQFIQNKEQTQEEFFHTFNELHQNNKQIVISSDRPPKEIAKLEDRLRSRFEWGLIVDITPPDYETRMAILQKKIEEENLDIPPEALNYIANQIQSNIRELEGALTRLLAYSKLQGKPITTELTAEALKDIIQSPKSKKITIQDIQKVVGQYYSVRIEDFSAKKRTKSIAYPRQIAMYLSRELTDFSLPKIGEEFGGRDHTTVIHAHEKIANDIKSDPTFKQEVENLEKEIRNQ.

Residues 1–71 are domain I, interacts with DnaA modulators; the sequence is MSEKEIWDKV…QAIIYDVIGY (71 aa). The interval 71–112 is domain II; that stretch reads YEVKPHFISEDELASYNNVNTQEVQEPQVQHSSIDDKTWGKE. Residues 113 to 329 form a domain III, AAA+ region region; sequence QFNMHNTFDT…GALTRLLAYS (217 aa). ATP contacts are provided by G157, G159, K160, and T161. Residues 330–451 form a domain IV, binds dsDNA region; the sequence is KLQGKPITTE…ENLEKEIRNQ (122 aa).

Belongs to the DnaA family. As to quaternary structure, oligomerizes as a right-handed, spiral filament on DNA at oriC.

The protein resides in the cytoplasm. Plays an essential role in the initiation and regulation of chromosomal replication. ATP-DnaA binds to the origin of replication (oriC) to initiate formation of the DNA replication initiation complex once per cell cycle. Binds the DnaA box (a 9 base pair repeat at the origin) and separates the double-stranded (ds)DNA. Forms a right-handed helical filament on oriC DNA; dsDNA binds to the exterior of the filament while single-stranded (ss)DNA is stabiized in the filament's interior. The ATP-DnaA-oriC complex binds and stabilizes one strand of the AT-rich DNA unwinding element (DUE), permitting loading of DNA polymerase. After initiation quickly degrades to an ADP-DnaA complex that is not apt for DNA replication. Binds acidic phospholipids. The protein is Chromosomal replication initiator protein DnaA of Staphylococcus epidermidis (strain ATCC 12228 / FDA PCI 1200).